A 244-amino-acid polypeptide reads, in one-letter code: Geranylgeranylglyceryl phosphate synthase (244 aa).

The Mg(2+) site is built by D20 and S49. Sn-glycerol 1-phosphate-binding positions include 169-175 (YLEAGSG), 200-201 (GG), and 222-223 (GT).

Belongs to the GGGP/HepGP synthase family. Group II subfamily. The cofactor is Mg(2+).

The protein localises to the cytoplasm. It catalyses the reaction sn-glycerol 1-phosphate + (2E,6E,10E)-geranylgeranyl diphosphate = sn-3-O-(geranylgeranyl)glycerol 1-phosphate + diphosphate. The protein operates within membrane lipid metabolism; glycerophospholipid metabolism. Its function is as follows. Prenyltransferase that catalyzes the transfer of the geranylgeranyl moiety of geranylgeranyl diphosphate (GGPP) to the C3 hydroxyl of sn-glycerol-1-phosphate (G1P). This reaction is the first ether-bond-formation step in the biosynthesis of archaeal membrane lipids. This chain is Geranylgeranylglyceryl phosphate synthase, found in Korarchaeum cryptofilum (strain OPF8).